The chain runs to 353 residues: Protein-glutamate methylesterase/protein-glutamine glutaminase 3 (353 aa).

Residues 3–120 (KVLIADDSAL…SSSSDMKKVA (118 aa)) form the Response regulatory domain. Position 54 is a 4-aspartylphosphate (Asp-54). Positions 158–353 (PRPGREVTKA…AREIIRAVNR (196 aa)) constitute a CheB-type methylesterase domain. Active-site residues include Ser-173, His-200, and Asp-296.

This sequence belongs to the CheB family. In terms of processing, phosphorylated by CheA. Phosphorylation of the N-terminal regulatory domain activates the methylesterase activity.

Its subcellular location is the cytoplasm. The catalysed reaction is [protein]-L-glutamate 5-O-methyl ester + H2O = L-glutamyl-[protein] + methanol + H(+). It carries out the reaction L-glutaminyl-[protein] + H2O = L-glutamyl-[protein] + NH4(+). Its function is as follows. Involved in chemotaxis. Part of a chemotaxis signal transduction system that modulates chemotaxis in response to various stimuli. Catalyzes the demethylation of specific methylglutamate residues introduced into the chemoreceptors (methyl-accepting chemotaxis proteins or MCP) by CheR. Also mediates the irreversible deamidation of specific glutamine residues to glutamic acid. The sequence is that of Protein-glutamate methylesterase/protein-glutamine glutaminase 3 from Syntrophomonas wolfei subsp. wolfei (strain DSM 2245B / Goettingen).